We begin with the raw amino-acid sequence, 152 residues long: Methylglyoxal synthase (152 aa).

Residues 5–152 enclose the MGS-like domain; that stretch reads TRTVQAQKHI…YQLYLQQRLK (148 aa). Residues His-19, Lys-23, 45–48, and 65–66 each bind substrate; these read TGTT and SG. Asp-71 (proton donor/acceptor) is an active-site residue. His-98 contacts substrate.

It belongs to the methylglyoxal synthase family.

The enzyme catalyses dihydroxyacetone phosphate = methylglyoxal + phosphate. Functionally, catalyzes the formation of methylglyoxal from dihydroxyacetone phosphate. In Erwinia tasmaniensis (strain DSM 17950 / CFBP 7177 / CIP 109463 / NCPPB 4357 / Et1/99), this protein is Methylglyoxal synthase.